The following is a 100-amino-acid chain: Small ribosomal subunit protein uS14c (100 aa).

Belongs to the universal ribosomal protein uS14 family. As to quaternary structure, part of the 30S ribosomal subunit.

Its subcellular location is the plastid. It is found in the chloroplast. In terms of biological role, binds 16S rRNA, required for the assembly of 30S particles. The sequence is that of Small ribosomal subunit protein uS14c from Nasturtium officinale (Watercress).